The chain runs to 143 residues: uncharacterized protein (143 aa).

Positions 24 to 78 (IRQRREWQNMSQTTLGEAIGVTFQQVQKYEKGVNRVGAGRLQQISKALKVEPSYF) constitute an HTH cro/C1-type domain. The segment at residues 35 to 54 (QTTLGEAIGVTFQQVQKYEK) is a DNA-binding region (H-T-H motif).

This is an uncharacterized protein from Sinorhizobium fredii (strain NBRC 101917 / NGR234).